Consider the following 377-residue polypeptide: Chaperone protein DnaJ (377 aa).

In terms of domain architecture, J spans 5–70 (DYYEVLGVGK…EKKAAYDQYG (66 aa)). The CR-type zinc-finger motif lies at 137 to 215 (GHEAQIRVPH…CHGQGKLKSQ (79 aa)). Residues C150, C153, C167, C170, C189, C192, C203, and C206 each contribute to the Zn(2+) site. CXXCXGXG motif repeat units follow at residues 150–157 (CDHCHGNG), 167–174 (CPTCHGAG), 189–196 (CPKCHGSG), and 203–210 (CTKCHGQG).

The protein belongs to the DnaJ family. As to quaternary structure, homodimer. It depends on Zn(2+) as a cofactor.

It is found in the cytoplasm. In terms of biological role, participates actively in the response to hyperosmotic and heat shock by preventing the aggregation of stress-denatured proteins and by disaggregating proteins, also in an autonomous, DnaK-independent fashion. Unfolded proteins bind initially to DnaJ; upon interaction with the DnaJ-bound protein, DnaK hydrolyzes its bound ATP, resulting in the formation of a stable complex. GrpE releases ADP from DnaK; ATP binding to DnaK triggers the release of the substrate protein, thus completing the reaction cycle. Several rounds of ATP-dependent interactions between DnaJ, DnaK and GrpE are required for fully efficient folding. Also involved, together with DnaK and GrpE, in the DNA replication of plasmids through activation of initiation proteins. This Cupriavidus taiwanensis (strain DSM 17343 / BCRC 17206 / CCUG 44338 / CIP 107171 / LMG 19424 / R1) (Ralstonia taiwanensis (strain LMG 19424)) protein is Chaperone protein DnaJ.